Reading from the N-terminus, the 219-residue chain is Interleukin-12 subunit alpha (219 aa).

The N-terminal stretch at Met1–Ala22 is a signal peptide. Disulfide bonds link Cys37–Cys110, Cys64–Cys196, and Cys85–Cys123. N-linked (GlcNAc...) asparagine glycosylation is found at Asn93 and Asn107.

The protein belongs to the IL-6 superfamily. Heterodimer with IL12B; disulfide-linked. This heterodimer is known as interleukin IL-12. Heterodimer with EBI3/IL27B; not disulfide-linked. This heterodimer is known as interleukin IL-35. Interacts with NBR1; this interaction promotes IL-12 secretion.

The protein resides in the secreted. Functionally, heterodimerizes with IL12B to form the IL-12 cytokine or with EBI3/IL27B to form the IL-35 cytokine. IL-12 is primarily produced by professional antigen-presenting cells (APCs) such as B-cells and dendritic cells (DCs) as well as macrophages and granulocytes and regulates T-cell and natural killer-cell responses, induces the production of interferon-gamma (IFN-gamma), favors the differentiation of T-helper 1 (Th1) cells and is an important link between innate resistance and adaptive immunity. Mechanistically, exerts its biological effects through a receptor composed of IL12R1 and IL12R2 subunits. Binding to the receptor results in the rapid tyrosine phosphorylation of a number of cellular substrates including the JAK family kinases TYK2 and JAK2. In turn, recruited STAT4 gets phosphorylated and translocates to the nucleus where it regulates cytokine/growth factor responsive genes. As part of IL-35, plays essential roles in maintaining the immune homeostasis of the liver microenvironment and also functions as an immune-suppressive cytokine. Mediates biological events through unconventional receptors composed of IL12RB2 and gp130/IL6ST heterodimers or homodimers. Signaling requires the transcription factors STAT1 and STAT4, which form a unique heterodimer that binds to distinct DNA sites. The chain is Interleukin-12 subunit alpha (IL12A) from Homo sapiens (Human).